The sequence spans 297 residues: Carbamate kinase (297 aa).

Belongs to the carbamate kinase family.

The protein localises to the cytoplasm. It catalyses the reaction hydrogencarbonate + NH4(+) + ATP = carbamoyl phosphate + ADP + H2O + H(+). It carries out the reaction carbamate + ATP = carbamoyl phosphate + ADP. The enzyme catalyses hydrogencarbonate + NH4(+) = carbamate + H2O + H(+). Its pathway is nitrogen metabolism; (S)-allantoin degradation. In terms of biological role, kinase involved in the anaerobic nitrogen utilization via the assimilation of allantoin. Catalyzes the transfer of a phosphate group from carbamoyl phosphate to ADP to produce ATP and leave carbamate, which spontaneously hydrolyzes to ammonia and hydrogencarbonate. The sequence is that of Carbamate kinase from Escherichia coli (strain K12).